The chain runs to 222 residues: Polyadenylate-binding protein 2 (222 aa).

Residues 1-43 (MTDNNNGEIVEDKDNEKLKGEDNINNHISNHNNTEETSFEDPE) form a disordered region. Residues 10-24 (VEDKDNEKLKGEDNI) show a composition bias toward basic and acidic residues. An RRM domain is found at 101-178 (RSVYVGNVDY…RQLKITPKRT (78 aa)).

The protein resides in the nucleus. Its function is as follows. Involved in the 3'-end formation of mRNA precursors (pre-mRNA) by the addition of a poly(A) tail of 200-250 nt to the upstream cleavage product. In Dictyostelium discoideum (Social amoeba), this protein is Polyadenylate-binding protein 2 (pabpn1).